We begin with the raw amino-acid sequence, 344 residues long: KRR1 small subunit processome component homolog (344 aa).

Residues 126–194 enclose the KH domain; it reads DIIKIGNLVH…VRDIVLDTMN (69 aa). Residues 230-246 show a composition bias toward basic residues; sequence KNKNISKRKQPKNKKPK. The segment at 230–326 is disordered; sequence KNKNISKRKQ…KRAAEDNKVD (97 aa). Residues 271–344 adopt a coiled-coil conformation; the sequence is FLNKEQKQAK…MKANKKKERS (74 aa). Residues 272–303 show a composition bias toward basic and acidic residues; it reads LNKEQKQAKRQQERTAKQAEAAKKQDERRNKD.

Belongs to the KRR1 family. Monomer. Component of the ribosomal small subunit (SSU) processome.

It localises to the nucleus. Its subcellular location is the nucleolus. In terms of biological role, required for 40S ribosome biogenesis. Involved in nucleolar processing of pre-18S ribosomal RNA and ribosome assembly. Binds to RNA. Required for female germline development, cell viability during eye development and for survival of dividing cells and epithelial cells during early wing disk development. The protein is KRR1 small subunit processome component homolog of Drosophila mojavensis (Fruit fly).